Reading from the N-terminus, the 441-residue chain is tRNA modification GTPase MnmE (441 aa).

Residues R24, E81, and K121 each contribute to the (6S)-5-formyl-5,6,7,8-tetrahydrofolate site. The TrmE-type G domain maps to 218-366 (GMVVAIAGPP…LLRELTRFAA (149 aa)). GTP-binding positions include 228–233 (NVGKST), 247–253 (SPHAGTT), and 272–275 (DTAG). Residues S232 and T253 each contribute to the Mg(2+) site. K441 contributes to the (6S)-5-formyl-5,6,7,8-tetrahydrofolate binding site.

Belongs to the TRAFAC class TrmE-Era-EngA-EngB-Septin-like GTPase superfamily. TrmE GTPase family. As to quaternary structure, homodimer. Heterotetramer of two MnmE and two MnmG subunits. Requires K(+) as cofactor.

Its subcellular location is the cytoplasm. Its function is as follows. Exhibits a very high intrinsic GTPase hydrolysis rate. Involved in the addition of a carboxymethylaminomethyl (cmnm) group at the wobble position (U34) of certain tRNAs, forming tRNA-cmnm(5)s(2)U34. The polypeptide is tRNA modification GTPase MnmE (Rhodopseudomonas palustris (strain ATCC BAA-98 / CGA009)).